We begin with the raw amino-acid sequence, 348 residues long: MNDRQAALDQALKQIEKQFGKGSIMKLGEHSDQNISTISSGSLALDIALGVGGYPRGRIIEVYGPESSGKTTVALHAIAEVQAQGGTAAFIDAEHALDPAYAKNLGVNIDELLLSQPDTGEQALEIAEALVRSGAVDMLVIDSVAALVPRAEIEGEMGDAHVGLQARLMSQALRKLSGVINKSKTIAIFINQIREKVGVMFGNPEITPGGRALKFYSTVRLEVRRAEQLKQGTDVMGNKTKIKVVKNKVAPPFRIAEVDIMYGEGISREGELVDMAAEVDVINKSGSWYSYKEERIGQGRENAKQYLKEHTDIRDEISKRVREEYEIDGSSKEPLDEKEETLSLLDDE.

64-71 is a binding site for ATP; it reads GPESSGKT. Positions 325-335 are enriched in basic and acidic residues; the sequence is YEIDGSSKEPL. The tract at residues 325-348 is disordered; sequence YEIDGSSKEPLDEKEETLSLLDDE.

This sequence belongs to the RecA family.

It is found in the cytoplasm. In terms of biological role, can catalyze the hydrolysis of ATP in the presence of single-stranded DNA, the ATP-dependent uptake of single-stranded DNA by duplex DNA, and the ATP-dependent hybridization of homologous single-stranded DNAs. It interacts with LexA causing its activation and leading to its autocatalytic cleavage. The sequence is that of Protein RecA from Listeria monocytogenes serotype 1/2a (strain 10403S).